We begin with the raw amino-acid sequence, 754 residues long: uncharacterized protein (754 aa).

Residues 1–110 (MNKGQNQVVP…RNMLGSLQKT (110 aa)) form a disordered region. Polar residues predominate over residues 15–25 (FGGQNPPQLSS). Over residues 26 to 35 (IPPIVNPVVV) the composition is skewed to low complexity. A compositionally biased stretch (polar residues) spans 36–46 (QNRTSPGTPFI). Positions 49 to 60 (KAKEIYNRRQQE) are enriched in basic and acidic residues. Positions 62 to 72 (ISSDSEEEESP) are enriched in acidic residues. The span at 76-93 (AKSKYSRDSRDSRDTRDS) shows a compositional bias: basic and acidic residues.

The protein resides in the virion. This is an uncharacterized protein from Acanthamoeba polyphaga mimivirus (APMV).